A 232-amino-acid polypeptide reads, in one-letter code: Sugar fermentation stimulation protein homolog (232 aa).

This sequence belongs to the SfsA family.

The protein is Sugar fermentation stimulation protein homolog of Geobacter metallireducens (strain ATCC 53774 / DSM 7210 / GS-15).